The sequence spans 830 residues: Cyclin-dependent kinase inhibitor FAR1 (830 aa).

The segment at 1 to 31 is disordered; the sequence is MKTPTRVSFEKKIHTPPSGDRDAERSPPKKF. Residues 8–27 show a composition bias toward basic and acidic residues; the sequence is SFEKKIHTPPSGDRDAERSP. A Phosphoserine; by CDC28 modification is found at S87. A phosphoserine mark is found at S110 and S114. The segment at 202–252 adopts an RING-type zinc-finger fold; that stretch reads CLICEESISSTFTGEKVVESTCSHTSHYNCYLMLFETLYFQGKFPECKICG. Position 306 is a phosphothreonine (T306).

As to quaternary structure, associates with the CDC28-CLN complex. Post-translationally, thought to be phosphorylated by MAP kinase FUS3. Thought to enhance the binding of FAR1 to G1-specific cyclin-dependent kinase (CDK) complexes.

Inhibitor of the cyclin-dependent kinase CDC28. Necessary for cell cycle arrest. Involved in pheromone response. Contributes to mating efficiency. Required for oriented polarization of yeast cells in response to mating pheromones. In Saccharomyces cerevisiae (strain ATCC 204508 / S288c) (Baker's yeast), this protein is Cyclin-dependent kinase inhibitor FAR1 (FAR1).